The following is a 324-amino-acid chain: Nidogen-1 (324 aa).

The 163-residue stretch at 16–178 (PFLADLDTTD…GVWVFEIGSP (163 aa)) folds into the NIDO domain. The N-linked (GlcNAc...) asparagine glycan is linked to asparagine 97. Sulfotyrosine occurs at positions 200 and 205. The interval 219–259 (TQPFPSHSPRRGYPDPHNVPRTLAPSYEATERPHGIPTERT) is disordered. Positions 247–259 (ATERPHGIPTERT) are enriched in basic and acidic residues. Residues 295-324 (SQQTCANNRHQCSVHAECRDYATGFCCRCV) enclose the EGF-like domain. 2 disulfides stabilise this stretch: cysteine 299-cysteine 312 and cysteine 306-cysteine 321.

As to quaternary structure, interacts with FBLN1. Interacts with LGALS3BP. Interacts with PLXDC1. Interacts with SVEP1. Post-translationally, N- and O-glycosylated.

The protein resides in the secreted. The protein localises to the extracellular space. Its subcellular location is the extracellular matrix. It is found in the basement membrane. In terms of biological role, sulfated glycoprotein widely distributed in basement membranes and tightly associated with laminin. Also binds to collagen IV and perlecan. It probably has a role in cell-extracellular matrix interactions. This is Nidogen-1 (Nid1) from Rattus norvegicus (Rat).